The primary structure comprises 570 residues: Sulfite reductase [NADPH] hemoprotein beta-component (570 aa).

The [4Fe-4S] cluster site is built by Cys434, Cys440, Cys479, and Cys483. Cys483 is a siroheme binding site.

This sequence belongs to the nitrite and sulfite reductase 4Fe-4S domain family. In terms of assembly, alpha(8)-beta(8). The alpha component is a flavoprotein, the beta component is a hemoprotein. Siroheme serves as cofactor. It depends on [4Fe-4S] cluster as a cofactor.

The enzyme catalyses hydrogen sulfide + 3 NADP(+) + 3 H2O = sulfite + 3 NADPH + 4 H(+). Its pathway is sulfur metabolism; hydrogen sulfide biosynthesis; hydrogen sulfide from sulfite (NADPH route): step 1/1. Component of the sulfite reductase complex that catalyzes the 6-electron reduction of sulfite to sulfide. This is one of several activities required for the biosynthesis of L-cysteine from sulfate. This is Sulfite reductase [NADPH] hemoprotein beta-component from Escherichia coli O6:H1 (strain CFT073 / ATCC 700928 / UPEC).